Reading from the N-terminus, the 87-residue chain is U-scoloptoxin(23)-Er1a (87 aa).

A signal peptide spans 1 to 29 (MSLIVVRTHSFLFVLVLLLFASVFHSVDS). The segment at 32–54 (FNPNGRYGRRDSASALSDASENK) is disordered.

This sequence belongs to the scoloptoxin-23 family. As to expression, expressed by the venom gland.

The protein resides in the secreted. The protein is U-scoloptoxin(23)-Er1a of Ethmostigmus rubripes (Giant centipede).